Consider the following 196-residue polypeptide: Penicillin-binding protein activator LpoB (196 aa).

An N-terminal signal peptide occupies residues 1 to 16 (MKKYLGIVLMALVIAG). The N-palmitoyl cysteine moiety is linked to residue Cys17. The S-diacylglycerol cysteine moiety is linked to residue Cys17. Residues 24-54 (TEQPATIEPAVPTPSKPQLPPSESQPLPTPP) form a disordered region. Residues 34-43 (VPTPSKPQLP) show a composition bias toward pro residues.

It belongs to the LpoB family. In terms of assembly, interacts with PBP1b.

It is found in the cell outer membrane. Functionally, regulator of peptidoglycan synthesis that is essential for the function of penicillin-binding protein 1B (PBP1b). The polypeptide is Penicillin-binding protein activator LpoB (Dickeya dadantii (strain 3937) (Erwinia chrysanthemi (strain 3937))).